Here is a 304-residue protein sequence, read N- to C-terminus: Homoserine kinase (304 aa).

Position 86–96 (86–96) interacts with ATP; the sequence is PLARGLGSSAA.

Belongs to the GHMP kinase family. Homoserine kinase subfamily.

The protein resides in the cytoplasm. The catalysed reaction is L-homoserine + ATP = O-phospho-L-homoserine + ADP + H(+). The protein operates within amino-acid biosynthesis; L-threonine biosynthesis; L-threonine from L-aspartate: step 4/5. In terms of biological role, catalyzes the ATP-dependent phosphorylation of L-homoserine to L-homoserine phosphate. In Carboxydothermus hydrogenoformans (strain ATCC BAA-161 / DSM 6008 / Z-2901), this protein is Homoserine kinase.